The sequence spans 186 residues: Elongation factor P (186 aa).

This sequence belongs to the elongation factor P family.

It is found in the cytoplasm. The protein operates within protein biosynthesis; polypeptide chain elongation. Its function is as follows. Involved in peptide bond synthesis. Stimulates efficient translation and peptide-bond synthesis on native or reconstituted 70S ribosomes in vitro. Probably functions indirectly by altering the affinity of the ribosome for aminoacyl-tRNA, thus increasing their reactivity as acceptors for peptidyl transferase. The polypeptide is Elongation factor P (Prochlorococcus marinus (strain MIT 9211)).